The sequence spans 535 residues: MSTKYIFVTGGGTSSMGKGIVAASLGRLLKNRGLKVTVQKFDPYLNIDPGTMSPYQHGEVFVTDDGAETDLDLGHYERFIDINLNKYSNVTSGKVYSEILRKERKGEYLGATVQMVPHVTNMLKEKIKRAATTTDADIIITEVGGTVGDMESLPFIEALRQMKAEVGADNVMYIHTVPILHLRAAGELKTKIAQNATKTLREYGIQANMLVLRSEVPITTEMRDKIAMFCDVAPEAVIQSLDVEHLYQIPLNLQAQNMDQIVCDHLKLDAPKADMAEWSAMVDHVMNLKKKVKIALVGKYVELPDAYISVTEALKHAGYASDAEVDINWVNANDVTDENVAELVGDAAGIIVPGGFGQRGTEGKIAAIKYARENDVPMLGICLGMQLTAVEFARNVLGLEGAHSFELDPETKYPVIDIMRDQVDVEDMGGTLRLGLYPAKLKNGSRAKAAYNDAEVVQRRHRHRYEFNNKYREDFEKAGFVFSGVSPDNRLVEIVELSGKKFFVACQYHPELQSRPNRPEELYTEFIRVAVENSK.

Residues 1-268 (MSTKYIFVTG…DQIVCDHLKL (268 aa)) form an amidoligase domain region. Residue serine 14 participates in CTP binding. Residue serine 14 coordinates UTP. 15-20 (SMGKGI) serves as a coordination point for ATP. Residue tyrosine 55 participates in L-glutamine binding. Aspartate 72 contacts ATP. Residues aspartate 72 and glutamate 142 each coordinate Mg(2+). CTP-binding positions include 149–151 (DME), 189–194 (KTKIAQ), and lysine 225. Residues 189 to 194 (KTKIAQ) and lysine 225 each bind UTP. An ATP-binding site is contributed by valine 243. Residues 293 to 535 (KIALVGKYVE…FIRVAVENSK (243 aa)) enclose the Glutamine amidotransferase type-1 domain. Position 355 (glycine 355) interacts with L-glutamine. Cysteine 382 acts as the Nucleophile; for glutamine hydrolysis in catalysis. L-glutamine is bound by residues 383-386 (LGMQ), glutamate 406, and arginine 464. Catalysis depends on residues histidine 509 and glutamate 511.

The protein belongs to the CTP synthase family. Homotetramer. In contrast to E.coli CTP synthase, remains a tetramer at dilute enzyme concentrations even in the absence of Mg(2+), ATP and UTP.

It carries out the reaction UTP + L-glutamine + ATP + H2O = CTP + L-glutamate + ADP + phosphate + 2 H(+). The catalysed reaction is L-glutamine + H2O = L-glutamate + NH4(+). The enzyme catalyses UTP + NH4(+) + ATP = CTP + ADP + phosphate + 2 H(+). It functions in the pathway pyrimidine metabolism; CTP biosynthesis via de novo pathway; CTP from UDP: step 2/2. With respect to regulation, allosterically activated by GTP, when glutamine is the substrate. GTP has no effect on the reaction when ammonia is the substrate. The allosteric effector GTP functions by stabilizing the protein conformation that binds the tetrahedral intermediate(s) formed during glutamine hydrolysis. Also activated by magnesium. Allosterically inhibited by CTP. In terms of biological role, catalyzes the ATP-dependent amination of UTP to CTP with either L-glutamine or ammonia as the source of nitrogen. Is essential for the synthesis of CTP de novo. Contrary to other bacterial CTP synthases, the lactococcal enzyme is also able to convert dUTP to dCTP, but this reaction may not play a significant physiological role. Regulates intracellular CTP levels through interactions with the four ribonucleotide triphosphates. The sequence is that of CTP synthase from Lactococcus lactis subsp. cremoris (strain MG1363).